Consider the following 317-residue polypeptide: GTP cyclohydrolase MptA (317 aa).

Belongs to the GTP cyclohydrolase IV family. As to quaternary structure, homodimer. Requires Fe(2+) as cofactor.

The enzyme catalyses GTP + H2O = 7,8-dihydroneopterin 2',3'-cyclic phosphate + formate + diphosphate + H(+). Its pathway is cofactor biosynthesis; 5,6,7,8-tetrahydromethanopterin biosynthesis. Its function is as follows. Converts GTP to 7,8-dihydro-D-neopterin 2',3'-cyclic phosphate, the first intermediate in the biosynthesis of coenzyme methanopterin. This chain is GTP cyclohydrolase MptA, found in Methanococcoides burtonii (strain DSM 6242 / NBRC 107633 / OCM 468 / ACE-M).